Reading from the N-terminus, the 411-residue chain is MYHRHSAPPPPGRSRGYPPPQQQWPPQPYQYLPYPPQGPPPAHTFPPPAHRSYPSPYPTPPPHSPSPYQYPHHGHSQSWSAPALPPRPPLEAQQFGNGAPSHYRFQYSACTGRRRALLIGINYIGQPNQLRGCINDVTNMSTFLHERYGYRREDMVILTDDQKNPLSIPTKANILRAMQWLVKDAQPNDSLFLHFSGHGGRTPDLDGDEEDGYDDVIYPVDYRVAGHIVDDEMHNIMVRPLRPGVRLTVIFDSCHSGTALDLPYVYSTQGILKEPNLAKEAAQDLFSAISSYGKGDLSGVAMTAIGFLKKAAKGDSARKRTVMTKTSPADVVMFSGSKDTQTSADTFQDGEARGALSWAFIKSLRQWPNQSYLQLLNSIRAQLEGKYTQKPQLSCSHPLGAWVMRAIEEPA.

The segment at M1–N97 is disordered. Residues A7 to P65 are compositionally biased toward pro residues. Residues H198 and C254 contribute to the active site.

The protein belongs to the peptidase C14B family.

Its function is as follows. Involved in cell death (apoptosis). The protein is Metacaspase-1B (casB) of Neosartorya fischeri (strain ATCC 1020 / DSM 3700 / CBS 544.65 / FGSC A1164 / JCM 1740 / NRRL 181 / WB 181) (Aspergillus fischerianus).